Here is a 370-residue protein sequence, read N- to C-terminus: Chaperone protein DnaJ (370 aa).

Positions 7-73 constitute a J domain; the sequence is DYYEILGVPR…QKRAMYDRFG (67 aa). The CR-type zinc finger occupies 144–226; the sequence is GTEIPIEYER…CGGSGRVLRR (83 aa). Zn(2+) is bound by residues cysteine 157, cysteine 160, cysteine 174, cysteine 177, cysteine 200, cysteine 203, cysteine 214, and cysteine 217. CXXCXGXG motif repeat units lie at residues 157–164, 174–181, 200–207, and 214–221; these read CPRCGGTG, CDECGGTG, and CHECGGSG.

It belongs to the DnaJ family. Homodimer. Zn(2+) is required as a cofactor.

It localises to the cytoplasm. Participates actively in the response to hyperosmotic and heat shock by preventing the aggregation of stress-denatured proteins and by disaggregating proteins, also in an autonomous, DnaK-independent fashion. Unfolded proteins bind initially to DnaJ; upon interaction with the DnaJ-bound protein, DnaK hydrolyzes its bound ATP, resulting in the formation of a stable complex. GrpE releases ADP from DnaK; ATP binding to DnaK triggers the release of the substrate protein, thus completing the reaction cycle. Several rounds of ATP-dependent interactions between DnaJ, DnaK and GrpE are required for fully efficient folding. Also involved, together with DnaK and GrpE, in the DNA replication of plasmids through activation of initiation proteins. In Thermotoga neapolitana (strain ATCC 49049 / DSM 4359 / NBRC 107923 / NS-E), this protein is Chaperone protein DnaJ.